The chain runs to 213 residues: Octanoyltransferase (213 aa).

A BPL/LPL catalytic domain is found at 36–211 (TNTPDEIWLV…KFCQQLGFKL (176 aa)). Residues 75-82 (RGGQVTYH), 142-144 (SLG), and 155-157 (GLA) contribute to the substrate site. The active-site Acyl-thioester intermediate is Cys-173.

It belongs to the LipB family.

The protein resides in the cytoplasm. The enzyme catalyses octanoyl-[ACP] + L-lysyl-[protein] = N(6)-octanoyl-L-lysyl-[protein] + holo-[ACP] + H(+). The protein operates within protein modification; protein lipoylation via endogenous pathway; protein N(6)-(lipoyl)lysine from octanoyl-[acyl-carrier-protein]: step 1/2. Catalyzes the transfer of endogenously produced octanoic acid from octanoyl-acyl-carrier-protein onto the lipoyl domains of lipoate-dependent enzymes. Lipoyl-ACP can also act as a substrate although octanoyl-ACP is likely to be the physiological substrate. In Photorhabdus laumondii subsp. laumondii (strain DSM 15139 / CIP 105565 / TT01) (Photorhabdus luminescens subsp. laumondii), this protein is Octanoyltransferase.